Reading from the N-terminus, the 347-residue chain is MSGLLCYCRQGFEPELAAELSARAAFVGIAGYARTQRNDGYVLFVCDEAAQLAARLQWRELIFARQKLVVLAELKGLDPKDRITPILAALDGQPRFGDLWVEHPDSDAGKPLAGLARSFGNALRPALRKAGLLTDKPQARLPRLHICFLDGDHALLAVADSSDSAPWPLGIPRLKLLPEAPSRSALKLDEALLTLLTPEEREQLVKPGMRAADLGAAPGGWTWVLTRQHVHVTSVDNGPLREHVLATGLVEHLRADGFHWKPAQPLDWMVCDMVEQPRRVAERMATWVREGWCRHTIFNLKLPMKKRWDETRLCLDLFEQQAEKSLTVRAKQLYHDREEITVLAMRG.

Residues S184, 217–220, D236, D256, and D272 contribute to the S-adenosyl-L-methionine site; that span reads APGG. Residue K301 is the Proton acceptor of the active site.

The protein belongs to the class I-like SAM-binding methyltransferase superfamily. RNA methyltransferase RlmE family. RlmM subfamily. Monomer.

It localises to the cytoplasm. It catalyses the reaction cytidine(2498) in 23S rRNA + S-adenosyl-L-methionine = 2'-O-methylcytidine(2498) in 23S rRNA + S-adenosyl-L-homocysteine + H(+). In terms of biological role, catalyzes the 2'-O-methylation at nucleotide C2498 in 23S rRNA. This is Ribosomal RNA large subunit methyltransferase M from Xanthomonas campestris pv. campestris (strain 8004).